A 675-amino-acid polypeptide reads, in one-letter code: Transmembrane protein 232 (675 aa).

Residues 163 to 183 (LVKIGYLIFLRLFVFFLHGHL) traverse the membrane as a helical segment. A coiled-coil region spans residues 598-634 (WQKDMEARKREEEAYKAQNQKDKEEKEKIHFQEIMKQ). Positions 605 to 624 (RKREEEAYKAQNQKDKEEKE) are disordered.

High expression in the testis and weak expression levels in the spleen, liver, brain, uterus, lung, epididymis and kidney. Not detected in the heart or ovary.

The protein localises to the membrane. Functionally, plays a critical role for male fertility and sperm motility by regulating sperm cytoplasm removal and maintaining axoneme integrity. The protein is Transmembrane protein 232 (Tmem232) of Mus musculus (Mouse).